Reading from the N-terminus, the 702-residue chain is Phosphatase and actin regulator 4 (702 aa).

3 disordered regions span residues 1–38, 82–194, and 222–363; these read MEDP…SKFS, GVLL…SSGG, and NLSV…PFPA. The stretch at 63–88 is one RPEL 1 repeat; it reads EVLERKISMRKPREELVKRGVLLEDP. A compositionally biased stretch (polar residues) spans 106 to 120; the sequence is GHTTPIGNARSSSPV. 4 positions are modified to phosphoserine: S116, S118, S131, and S147. Residues 147–156 show a composition bias toward polar residues; it reads STGSQPNSEA. A compositionally biased stretch (pro residues) spans 163–173; it reads VPKPPLLPPKR. Residues 233–250 show a composition bias toward low complexity; the sequence is TLPAAPASTNTTATPSLT. S270 and S291 each carry phosphoserine. Residues 301–318 show a composition bias toward polar residues; that stretch reads PSTSVPTLESAAAITTKT. S342 and S344 each carry phosphoserine. Pro residues predominate over residues 342–362; the sequence is SPSPPLPTHIPPEPPRTPPFP. T358 bears the Phosphothreonine mark. Residue S427 is modified to Phosphoserine. T432 bears the Phosphothreonine mark. S443, S453, and S464 each carry phosphoserine. The tract at residues 473-536 is disordered; the sequence is KVPDDEEEEE…EEDEDESYQS (64 aa). Residues 486–497 show a composition bias toward low complexity; it reads PSTFSEETTPTS. Positions 508-518 are enriched in acidic residues; that stretch reads EEEEKESDSDS. A phosphoserine mark is found at S514, S516, S557, and S590. RPEL repeat units follow at residues 583–608 and 621–646; these read NTLI…QPKN and RRLT…RFNE. A disordered region spans residues 592–615; it reads RPTPEELEQRNILQPKNEADRQAE. S628 bears the Phosphoserine mark.

The protein belongs to the phosphatase and actin regulator family. In terms of assembly, binds PPP1CA and actin.

The protein localises to the cytoplasm. The protein resides in the cell projection. Its subcellular location is the lamellipodium. Functionally, regulator of protein phosphatase 1 (PP1) required for neural tube and optic fissure closure, and enteric neural crest cell (ENCCs) migration during development. Acts as an activator of PP1 by interacting with PPP1CA and preventing phosphorylation of PPP1CA at 'Thr-320'. During neural tube closure, localizes to the ventral neural tube and activates PP1, leading to down-regulate cell proliferation within cranial neural tissue and the neural retina. Also acts as a regulator of migration of enteric neural crest cells (ENCCs) by activating PP1, leading to dephosphorylation and subsequent activation of cofilin (COF1 or COF2) and repression of the integrin signaling through the RHO/ROCK pathway. This chain is Phosphatase and actin regulator 4 (PHACTR4), found in Pongo abelii (Sumatran orangutan).